The following is a 174-amino-acid chain: Protein GrpE (174 aa).

It belongs to the GrpE family. As to quaternary structure, homodimer.

It is found in the cytoplasm. Participates actively in the response to hyperosmotic and heat shock by preventing the aggregation of stress-denatured proteins, in association with DnaK and GrpE. It is the nucleotide exchange factor for DnaK and may function as a thermosensor. Unfolded proteins bind initially to DnaJ; upon interaction with the DnaJ-bound protein, DnaK hydrolyzes its bound ATP, resulting in the formation of a stable complex. GrpE releases ADP from DnaK; ATP binding to DnaK triggers the release of the substrate protein, thus completing the reaction cycle. Several rounds of ATP-dependent interactions between DnaJ, DnaK and GrpE are required for fully efficient folding. The polypeptide is Protein GrpE (Pseudothermotoga lettingae (strain ATCC BAA-301 / DSM 14385 / NBRC 107922 / TMO) (Thermotoga lettingae)).